The sequence spans 104 residues: U-scoloptoxin(10)-Cw1a (104 aa).

Positions 1–23 (MNKTVAVFFAVICVICVIKSCKT) are cleaved as a signal peptide.

It belongs to the scoloptoxin-10 family. Post-translationally, contains 3 disulfide bonds. Expressed by the venom gland.

It is found in the secreted. The protein is U-scoloptoxin(10)-Cw1a of Cormocephalus westwoodi (Westwood's green centipede).